The following is a 264-amino-acid chain: MRNIHATAVIGSGAVLGEGVEIGPYTVIEDDVVIGDRTVIGPHVHIADGARIGNECRISTGAVLATAPQDLKYAGEKTYLHIGDRTVIRECVTLNRGTKASGKTVVGSDNLIMAYVHAGHDCVIGNHVVIANSVQFGGHCHVGDYVVVGGLAGVHQXVRIGRYAMVGGISRAALDVPPFVMAGGHASFRYEGLNVIGLKRRGFTSEQLGNIRDAYRIIFQSGLLLSKALEAVRNDLPQTPEVVEILDFFASGVYNRKFLKPFNS.

Belongs to the transferase hexapeptide repeat family. LpxA subfamily. As to quaternary structure, homotrimer.

The protein resides in the cytoplasm. The enzyme catalyses a (3R)-hydroxyacyl-[ACP] + UDP-N-acetyl-alpha-D-glucosamine = a UDP-3-O-[(3R)-3-hydroxyacyl]-N-acetyl-alpha-D-glucosamine + holo-[ACP]. It participates in glycolipid biosynthesis; lipid IV(A) biosynthesis; lipid IV(A) from (3R)-3-hydroxytetradecanoyl-[acyl-carrier-protein] and UDP-N-acetyl-alpha-D-glucosamine: step 1/6. Functionally, involved in the biosynthesis of lipid A, a phosphorylated glycolipid that anchors the lipopolysaccharide to the outer membrane of the cell. In Chlorobaculum tepidum (strain ATCC 49652 / DSM 12025 / NBRC 103806 / TLS) (Chlorobium tepidum), this protein is Acyl-[acyl-carrier-protein]--UDP-N-acetylglucosamine O-acyltransferase.